The following is a 212-amino-acid chain: Phosphatidylserine decarboxylase proenzyme (212 aa).

The active-site Schiff-base intermediate with substrate; via pyruvic acid is Ser182. Pyruvic acid (Ser); by autocatalysis is present on Ser182.

It belongs to the phosphatidylserine decarboxylase family. PSD-A subfamily. As to quaternary structure, heterodimer of a large membrane-associated beta subunit and a small pyruvoyl-containing alpha subunit. Requires pyruvate as cofactor. Post-translationally, is synthesized initially as an inactive proenzyme. Formation of the active enzyme involves a self-maturation process in which the active site pyruvoyl group is generated from an internal serine residue via an autocatalytic post-translational modification. Two non-identical subunits are generated from the proenzyme in this reaction, and the pyruvate is formed at the N-terminus of the alpha chain, which is derived from the carboxyl end of the proenzyme. The post-translation cleavage follows an unusual pathway, termed non-hydrolytic serinolysis, in which the side chain hydroxyl group of the serine supplies its oxygen atom to form the C-terminus of the beta chain, while the remainder of the serine residue undergoes an oxidative deamination to produce ammonia and the pyruvoyl prosthetic group on the alpha chain.

It is found in the cell membrane. It catalyses the reaction a 1,2-diacyl-sn-glycero-3-phospho-L-serine + H(+) = a 1,2-diacyl-sn-glycero-3-phosphoethanolamine + CO2. Its pathway is phospholipid metabolism; phosphatidylethanolamine biosynthesis; phosphatidylethanolamine from CDP-diacylglycerol: step 2/2. Its function is as follows. Catalyzes the formation of phosphatidylethanolamine (PtdEtn) from phosphatidylserine (PtdSer). The polypeptide is Phosphatidylserine decarboxylase proenzyme (Chlorobium luteolum (strain DSM 273 / BCRC 81028 / 2530) (Pelodictyon luteolum)).